A 1906-amino-acid polypeptide reads, in one-letter code: Zinc metalloprotease ZmpB (1906 aa).

The first 33 residues, 1–33 (MFKKDRFSIRKIKGVVGSVFLGSLLMAPSVVDA), serve as a signal peptide directing secretion. Positions 34-76 (ATYHYVNKEIISQEAKDLIQTGKPDRNEVVYGLVYQKDQLPQT) are excised as a propeptide. Residues 73 to 77 (LPQTG) carry the LPXTG sorting signal motif. Pentaglycyl murein peptidoglycan amidated threonine is present on T76. Helical transmembrane passes span 77-98 (GTEASVLTAFGLLTVGSLLLIY) and 105-127 (SVFLVGAMGLVVLPSAGAVDPVA). At 128–1906 (TLALASREGV…TNSFKTSIFK (1779 aa)) the chain is on the extracellular side. Residues 178-436 (VETPQSITNQ…KASSVSPTDY (259 aa)) are disordered. Polar residues predominate over residues 181–196 (PQSITNQEQARTENQV). 5 stretches are compositionally biased toward basic and acidic residues: residues 201–239 (EAPKEEAPKTEESPKEEPKSEVKPTDDTLPKVEEGKEDS), 252–262 (VESKPEEKVAV), 271–335 (KPAE…KEET), 352–375 (KQTEPTEEPKVEQAGEPVAPREDE), and 383–408 (EPEKQPEVPEEEKAVEETPKPEDKIK). 4 consecutive repeat copies span residues 277–291 (KVEQAGEPVAPREDE), 293–315 (APVEPEKQPEAPEEEKAVEETPK), 361–375 (KVEQAGEPVAPREDE), and 380–402 (APVEPEKQPEVPEEEKAVEETPK). Residues 277–375 (KVEQAGEPVA…GEPVAPREDE (99 aa)) are 2 X 15 AA repeats of K-V-E-Q-A-G-E-P-V-A-P-R-E-D-E. Positions 293–375 (APVEPEKQPE…GEPVAPREDE (83 aa)) are 2 X 23 AA approximate repeats. Polar residues predominate over residues 421–436 (LNNQIDKASSVSPTDY). Zn(2+) is bound at residue H1562. E1563 is an active-site residue. Zn(2+)-binding residues include H1566 and E1586.

Belongs to the peptidase M26 family. Requires Zn(2+) as cofactor. Post-translationally, the Gram-positive cell-wall anchor motif LPXTG is located in the N-terminal part, in contrast to such motifs in other known streptococcal and staphylococcal proteins. The protease could be cleaved by the sortase and anchored in the membrane via the two potential N-terminal transmembrane domains, whereas the propeptide located prior to the LPXTG motif would remain attached to the cell wall peptidoglycan by an amide bond.

Its subcellular location is the secreted. It is found in the cell wall. It localises to the membrane. Functionally, is a virulence factor capable of inducing inflammation in the lower respiratory tract, by increasing tumor necrosis factor alpha (TNF-alpha) concentration in the lungs. Also appears to have other functions important in virulence in models of pneumonia and septicemia. The polypeptide is Zinc metalloprotease ZmpB (zmpB) (Streptococcus pneumoniae serotype 4 (strain ATCC BAA-334 / TIGR4)).